The sequence spans 138 residues: uncharacterized protein (138 aa).

An N-terminal signal peptide occupies residues 1 to 35 (MVAPAARVFLRAVRAALTSTVPDLLCLLARGSPRG).

As to expression, isoform 1 is highly expressed in small intestine, testis and kidney, medium expressed in brain and heart and low expressed in colon; it could not be detected in liver, adrenal gland and pancreas.

Its subcellular location is the secreted. This is an uncharacterized protein from Homo sapiens (Human).